Consider the following 33-residue polypeptide: Cecropin-C (33 aa).

Lysine 21 is subject to 5-hydroxylysine.

As to quaternary structure, monomer. Hemolymph.

It is found in the secreted. In terms of biological role, cecropins have lytic and antibacterial activity against several Gram-positive and Gram-negative bacteria. Also has activity against fungi. The polypeptide is Cecropin-C (Heliothis virescens (Tobacco budworm moth)).